Here is a 204-residue protein sequence, read N- to C-terminus: MSNEEQAQKDDAQPVNEAAIDATAEQADAEVEELSAEQARILELEAALAASEATLAAQKDSVMRAIADADNVRKRAEGEVDKARKFALEKFASELLPVADNLERALQVADKENEAIKPVIEGVDITLKSFVSSIEKFGMKVIDPQGETFNPEQHQAMSMQENAELPANTVMAVMQKGYELNGRLLRPAMVMVSRAPEGGVDTQA.

Basic and acidic residues predominate over residues 1-12 (MSNEEQAQKDDA). The disordered stretch occupies residues 1–32 (MSNEEQAQKDDAQPVNEAAIDATAEQADAEVE). Over residues 17-26 (EAAIDATAEQ) the composition is skewed to low complexity.

Belongs to the GrpE family. As to quaternary structure, homodimer.

It localises to the cytoplasm. Its function is as follows. Participates actively in the response to hyperosmotic and heat shock by preventing the aggregation of stress-denatured proteins, in association with DnaK and GrpE. It is the nucleotide exchange factor for DnaK and may function as a thermosensor. Unfolded proteins bind initially to DnaJ; upon interaction with the DnaJ-bound protein, DnaK hydrolyzes its bound ATP, resulting in the formation of a stable complex. GrpE releases ADP from DnaK; ATP binding to DnaK triggers the release of the substrate protein, thus completing the reaction cycle. Several rounds of ATP-dependent interactions between DnaJ, DnaK and GrpE are required for fully efficient folding. This chain is Protein GrpE, found in Pseudoalteromonas atlantica (strain T6c / ATCC BAA-1087).